Reading from the N-terminus, the 177-residue chain is Large ribosomal subunit protein uL6 (177 aa).

The protein belongs to the universal ribosomal protein uL6 family. Part of the 50S ribosomal subunit.

Functionally, this protein binds to the 23S rRNA, and is important in its secondary structure. It is located near the subunit interface in the base of the L7/L12 stalk, and near the tRNA binding site of the peptidyltransferase center. This chain is Large ribosomal subunit protein uL6, found in Paracidovorax citrulli (strain AAC00-1) (Acidovorax citrulli).